Consider the following 147-residue polypeptide: MNDIFYMKRAIELSKLGEFTTAPNPNVGCVIVKNNIIVGEGWHEQAGKNHAEINALIMAGEKAQGGTAYVTLEPCNHFGKTPPCCNALIKSGINRVVISNIDPNPKISGNGILYLKKHGICVKTGLLSKESKQYNKGFFKRMKTGFP.

Residues 1–123 enclose the CMP/dCMP-type deaminase domain; the sequence is MNDIFYMKRA…YLKKHGICVK (123 aa). His-50 lines the Zn(2+) pocket. The active-site Proton donor is the Glu-52. Residues Cys-75 and Cys-84 each coordinate Zn(2+).

This sequence belongs to the cytidine and deoxycytidylate deaminase family. The cofactor is Zn(2+).

The enzyme catalyses 2,5-diamino-6-hydroxy-4-(5-phosphoribosylamino)-pyrimidine + H2O + H(+) = 5-amino-6-(5-phospho-D-ribosylamino)uracil + NH4(+). Its pathway is cofactor biosynthesis; riboflavin biosynthesis; 5-amino-6-(D-ribitylamino)uracil from GTP: step 2/4. The sequence is that of Diaminohydroxyphosphoribosylamino-pyrimidine deaminase (ribD1) from Buchnera aphidicola subsp. Acyrthosiphon pisum (strain APS) (Acyrthosiphon pisum symbiotic bacterium).